Consider the following 177-residue polypeptide: Thymidine kinase (177 aa).

An ATP-binding site is contributed by 11-18 (GPMFSGKS). Residue E83 is the Proton acceptor of the active site. Position 113 (F113) interacts with substrate. Zn(2+) contacts are provided by C138 and C141. Position 157–161 (157–161 (IEIIG)) interacts with substrate. The Zn(2+) site is built by C170 and C173.

This sequence belongs to the thymidine kinase family. In terms of assembly, homotetramer. Two molecules of substrate bind to each enzyme tetramer.

It carries out the reaction thymidine + ATP = dTMP + ADP + H(+). Functionally, phosphorylates thymidine and thymidine analogs, such as azidothymidine (AZT). Part of the salvage pathway for pyrimidine deoxyribonucleotide synthesis. This is Thymidine kinase (OPG101) from Procyon lotor (Raccoon).